The primary structure comprises 55 residues: Large ribosomal subunit protein bL32c (55 aa).

Belongs to the bacterial ribosomal protein bL32 family.

Its subcellular location is the plastid. It is found in the chloroplast. This chain is Large ribosomal subunit protein bL32c, found in Atropa belladonna (Belladonna).